The primary structure comprises 85 residues: Large ribosomal subunit protein bL27 (85 aa).

A disordered region spans residues 1–25; the sequence is MAHKKGVGSSRNGRDSNPKMLGVKR.

The protein belongs to the bacterial ribosomal protein bL27 family.

The polypeptide is Large ribosomal subunit protein bL27 (Roseiflexus castenholzii (strain DSM 13941 / HLO8)).